The sequence spans 246 residues: mRNA-decapping protein g5R (246 aa).

The Nudix hydrolase domain maps to 91–239 (KYQKFKKNWL…IIGPAFNFIK (149 aa)). A Nudix box motif is present at residues 128 to 149 (GKPKENESDLACAIREFEEETG). Mg(2+) is bound at residue Glu-134. Residue Glu-143 is the Nucleophile of the active site. Residues Glu-147 and Glu-169 each coordinate Mg(2+).

It belongs to the Nudix hydrolase family. DIPP subfamily. As to quaternary structure, interacts with host RPL23A. It depends on Mg(2+) as a cofactor. Requires Mn(2+) as cofactor.

It localises to the host rough endoplasmic reticulum. The catalysed reaction is diphospho-myo-inositol polyphosphate + H2O = myo-inositol polyphosphate + phosphate.. Its function is as follows. Decapping enzyme required for the removal of the 5'-end m7GpppN cap tethered to viral and host mRNAs to allow their decay in cells. May therefore accelerate viral and cellular mRNA turnover to eliminate competing host mRNAs and allow stage-specific synthesis of viral proteins. Acceleration of the turnover of cellular transcripts may even promote the shutoff of host protein synthesis. In addition to the mRNA cap, g5R also efficiently hydrolyzes diphosphoinositol polyphosphates. Down-regulation of the level of PP-InsP5 (diphosphoinositol pentakisphosphate) may play a role in viral manipulation of the cellular secretory pathway, a step necessary for the formation of virions. Binds viral and cellular poly(A) mRNAs, thereby decreasing both types of mRNAs. The polypeptide is mRNA-decapping protein g5R (African swine fever virus (isolate Pig/Kenya/KEN-50/1950) (ASFV)).